Here is a 398-residue protein sequence, read N- to C-terminus: Lysophospholipid transporter LplT (398 aa).

A run of 11 helical transmembrane segments spans residues 17-37 (AVLV…FAIL), 52-72 (ILQI…GQIA), 90-110 (LGAF…LVGV), 137-157 (GLME…GGFL), 163-183 (AIAL…NFFI), 226-246 (LFWG…PVVL), 256-276 (ILNV…ARFI), 285-305 (MPAG…HSIW), 309-329 (VLLI…NALL), 352-372 (IAML…VPVV), and 373-393 (TTGI…WIWN).

Belongs to the major facilitator superfamily. LplT (TC 2.A.1.42) family.

It localises to the cell inner membrane. In terms of biological role, catalyzes the facilitated diffusion of 2-acyl-glycero-3-phosphoethanolamine (2-acyl-GPE) into the cell. The sequence is that of Lysophospholipid transporter LplT from Photorhabdus laumondii subsp. laumondii (strain DSM 15139 / CIP 105565 / TT01) (Photorhabdus luminescens subsp. laumondii).